The chain runs to 310 residues: Coproporphyrin III ferrochelatase (310 aa).

Residues tyrosine 13, arginine 30, 46–47 (RY), serine 54, and tyrosine 125 contribute to the Fe-coproporphyrin III site. Histidine 183 and glutamate 264 together coordinate Fe(2+).

It belongs to the ferrochelatase family.

It localises to the cytoplasm. It carries out the reaction Fe-coproporphyrin III + 2 H(+) = coproporphyrin III + Fe(2+). It participates in porphyrin-containing compound metabolism; protoheme biosynthesis. Involved in coproporphyrin-dependent heme b biosynthesis. Catalyzes the insertion of ferrous iron into coproporphyrin III to form Fe-coproporphyrin III. This Geobacillus sp. (strain WCH70) protein is Coproporphyrin III ferrochelatase.